A 162-amino-acid polypeptide reads, in one-letter code: MRVGFGYDVHKLVEGRPLVLGGVSIPFVKGLLGHSDADVLAHAVMDALLGAAGAGDIGRHFPDNDGRYKGISSMKLLARVGDILSRQGLAVVNIDSVVVAQGPKLSPFIEEMQKRMAGALQIQPSQVSVKATTTEGLGFAGKGEGIAAYAVALVHKTGQAAT.

A divalent metal cation-binding residues include Asp8 and His10. 4-CDP-2-C-methyl-D-erythritol 2-phosphate contacts are provided by residues Asp8 to His10 and His34 to Ser35. His42 serves as a coordination point for a divalent metal cation. 4-CDP-2-C-methyl-D-erythritol 2-phosphate is bound by residues Asp56–Gly58, Phe61–Asp65, Thr132–Glu135, Phe139, and Lys142.

The protein belongs to the IspF family. Homotrimer. A divalent metal cation serves as cofactor.

It catalyses the reaction 4-CDP-2-C-methyl-D-erythritol 2-phosphate = 2-C-methyl-D-erythritol 2,4-cyclic diphosphate + CMP. It functions in the pathway isoprenoid biosynthesis; isopentenyl diphosphate biosynthesis via DXP pathway; isopentenyl diphosphate from 1-deoxy-D-xylulose 5-phosphate: step 4/6. In terms of biological role, involved in the biosynthesis of isopentenyl diphosphate (IPP) and dimethylallyl diphosphate (DMAPP), two major building blocks of isoprenoid compounds. Catalyzes the conversion of 4-diphosphocytidyl-2-C-methyl-D-erythritol 2-phosphate (CDP-ME2P) to 2-C-methyl-D-erythritol 2,4-cyclodiphosphate (ME-CPP) with a corresponding release of cytidine 5-monophosphate (CMP). The protein is 2-C-methyl-D-erythritol 2,4-cyclodiphosphate synthase of Pelotomaculum thermopropionicum (strain DSM 13744 / JCM 10971 / SI).